The sequence spans 194 residues: Lipoprotein signal peptidase (194 aa).

A run of 2 helical transmembrane segments spans residues 75–95 (TIFL…MICS) and 97–117 (TIGS…NLID). Catalysis depends on residues D126 and D144. Residues 135 to 155 (YSFPVFNLADCFITLGVIILM) traverse the membrane as a helical segment.

The protein belongs to the peptidase A8 family.

It localises to the cell inner membrane. The enzyme catalyses Release of signal peptides from bacterial membrane prolipoproteins. Hydrolyzes -Xaa-Yaa-Zaa-|-(S,diacylglyceryl)Cys-, in which Xaa is hydrophobic (preferably Leu), and Yaa (Ala or Ser) and Zaa (Gly or Ala) have small, neutral side chains.. Its pathway is protein modification; lipoprotein biosynthesis (signal peptide cleavage). Its function is as follows. This protein specifically catalyzes the removal of signal peptides from prolipoproteins. This Rickettsia prowazekii (strain Madrid E) protein is Lipoprotein signal peptidase.